Consider the following 131-residue polypeptide: uncharacterized protein (131 aa).

The 117-residue stretch at F14–T130 folds into the MSP domain.

This is an uncharacterized protein from Caenorhabditis elegans.